A 305-amino-acid chain; its full sequence is Transmembrane epididymal protein 1 (305 aa).

Residues 4-24 traverse the membrane as a helical segment; the sequence is FIGHISPGLFLVFYGLYQAII. Residue Asn-32 is glycosylated (N-linked (GlcNAc...) asparagine). The next 6 helical transmembrane spans lie at 51–71, 100–120, 124–144, 159–179, 187–207, and 223–243; these read LWQIAHAGWLKVVSGSLLIVY, LTMFILLTLDGCVEVVSRSVL, LVLLERGATVLGVYVLLLLLV, SLLILVVFLLMLVLTAELWAP, IETFLFLTMGSWLMQAAFILF, and IMLVTTFFCWHVMINALCMLG. The segment at 285–305 is disordered; sequence EQQDRDDQAPLLSKSSPCDRA.

This sequence belongs to the TMEM45 family.

The protein localises to the membrane. In Rattus norvegicus (Rat), this protein is Transmembrane epididymal protein 1 (Teddm1).